A 205-amino-acid chain; its full sequence is Heme-binding protein 2 (205 aa).

Residues Met1–Glu39 form a disordered region. At Ala2 the chain carries N-acetylalanine. Ser181 is subject to Phosphoserine.

This sequence belongs to the HEBP family. As to quaternary structure, monomer. Interacts with LRPPRC. May interact with BCL2L1; an interaction with BCL2L1 was observed using a peptide, but not with the full-length protein. The full-length protein would have to undergo a major conformation change for the interaction to occur. Interacts with PDCD6. Detected in placenta.

Its subcellular location is the cytoplasm. The protein localises to the mitochondrion. Can promote mitochondrial permeability transition and facilitate necrotic cell death under different types of stress conditions. The protein is Heme-binding protein 2 (HEBP2) of Homo sapiens (Human).